A 186-amino-acid polypeptide reads, in one-letter code: Intraflagellar transport protein 27 homolog (186 aa).

GTP is bound by residues 12–19, 64–68, and 123–126; these read GDPAVGKT, DSAGK, and TKTD.

This sequence belongs to the small GTPase superfamily. Rab family. Component of the IFT complex B, at least composed of IFT20, IFT22, IFT25, IFT27, IFT46, IFT52, TRAF3IP1/IFT54, IFT57, IFT74, IFT80, IFT81, and IFT88. Interacts with IFT25. Interacts with IFT70B. Interacts with RABL2/RABL2A; binding is equal in the presence of GTP or GDP. Interacts with IFT88. Interacts with ARL6; recognizes and binds with the GTP-free form of ARL6. As to expression, expressed predominantly in the testis (at protein level). Co-localizes with RABL2/RABL2A in the midpiece of elongated spermatids within the testis (at protein level).

The protein resides in the cell projection. The protein localises to the cilium. It localises to the cytoplasm. It is found in the flagellum. In terms of biological role, small GTPase-like component of the intraflagellar transport (IFT) complex B that promotes the exit of the BBSome complex from cilia via its interaction with ARL6. Not involved in entry of the BBSome complex into cilium. Prevents aggregation of GTP-free ARL6. Required for hedgehog signaling. Forms a subcomplex within the IFT complex B with IFT25. Its role in intraflagellar transport is mainly seen in tissues rich in ciliated cells such as kidney and testis. Essential for male fertility, spermiogenesis and sperm flagella formation. Plays a role in the early development of the kidney. May be involved in the regulation of ureteric bud initiation. The protein is Intraflagellar transport protein 27 homolog (Ift27) of Mus musculus (Mouse).